We begin with the raw amino-acid sequence, 2353 residues long: Otogelin-like protein (2353 aa).

A signal peptide spans 1-31 (MNIVRKLNLMIPWSIFLLHVLLFSLQEYICA). The 177-residue stretch at 121–297 (GICKTWGQYH…VQTPDDTKCV (177 aa)) folds into the VWFD 1 domain. Disulfide bonds link Cys123–Cys257 and Cys145–Cys296. An N-linked (GlcNAc...) asparagine glycan is attached at Asn144. One can recognise a TIL 1 domain in the interval 390–443 (CDDSFVHRDCISCCPPTCTFEKQCLGSNLHCLDGCYCPDGLVMDNGTCISLENC). N-linked (GlcNAc...) asparagine glycosylation is found at Asn434 and Asn473. One can recognise a VWFD 2 domain in the interval 481–654 (VQCSVVGDSH…NAWRVSSTCF (174 aa)). 3 cysteine pairs are disulfide-bonded: Cys483–Cys618, Cys505–Cys653, and Cys527–Cys535. The TIL 2 domain occupies 745 to 800 (CQKGMLYHHCSSFCLHSCISLSSPEQCSDDCAEGCNCPEGKFYEDTLNFCVPIFHC). Asn826 and Asn876 each carry an N-linked (GlcNAc...) asparagine glycan. Residues 946 to 1115 (AVCTIYGDRH…SWALGQCESP (170 aa)) enclose the VWFD 3 domain. 2 disulfides stabilise this stretch: Cys948–Cys1078 and Cys992–Cys999. 3 N-linked (GlcNAc...) asparagine glycosylation sites follow: Asn1289, Asn1604, and Asn2198. A VWFD 4 domain is found at 1534–1723 (CRCSMLSELS…SWEIEKSFEV (190 aa)). The cysteines at positions 1536 and 1683 are disulfide-linked. 4 disulfides stabilise this stretch: Cys2261–Cys2317, Cys2282–Cys2331, Cys2293–Cys2348, and Cys2297–Cys2350. Residues 2261 to 2353 (CKREERICQK…EPIDCTCQWN (93 aa)) enclose the CTCK domain.

It belongs to the otogelin family. Expressed at high levels in fetal inner ear and heart. Low levels in fetal skeletal muscle, kidney, spleen and colon. Not detected in fetal liver, lung, brain, nor in fetal stomach. In adult tissues, highest levels in brain, kidney, heart and retina. Relatively low levels in lung, spleen and duodenum. Not detected in adult skeletal muscle, liver, nor testis.

Its subcellular location is the secreted. This is Otogelin-like protein (OTOGL) from Homo sapiens (Human).